A 304-amino-acid polypeptide reads, in one-letter code: Oxygen-dependent coproporphyrinogen-III oxidase (304 aa).

Serine 94 is a substrate binding site. The a divalent metal cation site is built by histidine 98 and histidine 108. The Proton donor role is filled by histidine 108. Asparagine 110 to arginine 112 contributes to the substrate binding site. Histidine 147 and histidine 177 together coordinate a divalent metal cation. Positions tyrosine 242–arginine 277 are important for dimerization. Glycine 260 to arginine 262 contacts substrate.

The protein belongs to the aerobic coproporphyrinogen-III oxidase family. Homodimer. It depends on a divalent metal cation as a cofactor.

The protein localises to the cytoplasm. It carries out the reaction coproporphyrinogen III + O2 + 2 H(+) = protoporphyrinogen IX + 2 CO2 + 2 H2O. Its pathway is porphyrin-containing compound metabolism; protoporphyrin-IX biosynthesis; protoporphyrinogen-IX from coproporphyrinogen-III (O2 route): step 1/1. In terms of biological role, involved in the heme biosynthesis. Catalyzes the aerobic oxidative decarboxylation of propionate groups of rings A and B of coproporphyrinogen-III to yield the vinyl groups in protoporphyrinogen-IX. The chain is Oxygen-dependent coproporphyrinogen-III oxidase from Methylococcus capsulatus (strain ATCC 33009 / NCIMB 11132 / Bath).